Reading from the N-terminus, the 185-residue chain is Ribosome-recycling factor (185 aa).

This sequence belongs to the RRF family.

It is found in the cytoplasm. Responsible for the release of ribosomes from messenger RNA at the termination of protein biosynthesis. May increase the efficiency of translation by recycling ribosomes from one round of translation to another. This is Ribosome-recycling factor from Shewanella sediminis (strain HAW-EB3).